Here is a 100-residue protein sequence, read N- to C-terminus: Aspartyl/glutamyl-tRNA(Asn/Gln) amidotransferase subunit C (100 aa).

This sequence belongs to the GatC family. Heterotrimer of A, B and C subunits.

It catalyses the reaction L-glutamyl-tRNA(Gln) + L-glutamine + ATP + H2O = L-glutaminyl-tRNA(Gln) + L-glutamate + ADP + phosphate + H(+). The catalysed reaction is L-aspartyl-tRNA(Asn) + L-glutamine + ATP + H2O = L-asparaginyl-tRNA(Asn) + L-glutamate + ADP + phosphate + 2 H(+). In terms of biological role, allows the formation of correctly charged Asn-tRNA(Asn) or Gln-tRNA(Gln) through the transamidation of misacylated Asp-tRNA(Asn) or Glu-tRNA(Gln) in organisms which lack either or both of asparaginyl-tRNA or glutaminyl-tRNA synthetases. The reaction takes place in the presence of glutamine and ATP through an activated phospho-Asp-tRNA(Asn) or phospho-Glu-tRNA(Gln). This is Aspartyl/glutamyl-tRNA(Asn/Gln) amidotransferase subunit C from Streptococcus thermophilus (strain ATCC BAA-491 / LMD-9).